The chain runs to 566 residues: MNTELFGACLLLMLPEDIFVVISRFLSPSDICNLILCGKSLRALVDSEKTWLVQCEEVKVLPLLEIVQWRIGISSYKALCRFLVEVVKPLLGIWVQQNPELGNVVYVMPGFLSVVGCRIIPQKVAPSWIQEDRVKWSPVFEIICGFDGSNGFFLHGRDKEGSCLYPGFVMGIEKNCDVLQLEVVPRQEKSSCNEIERGASRKEGEIPFWMLAFSDRKHLLNIVTNHVGLHVVEPLNEMLFPTLKDDEVKLNERRTILLKMHKFGGNWKNMNLEEDGQLSYNPMQVKINEMLENLDDDFFFELHEDLIEVTPTESTYVLRKSSSSKNTTPSQSEIRHSNRKSFLSSGDTFGLGLKASYTEMSYYKGWPDMYVHHFLLYKLPVKKAVDHETYAGLWGGTFGWPAGKCPKGKTEKSLYLLMLTYEKEYSERVLIGTKILEGNRLVSRPNGTTMFVVKIDTPSLEPFPVDADEIHFENSYSGKGVTDGYGFRYLGSKPGSLFVITNDFLAFVWKDTKTMITLHRLNLTEILKKGLGSCVPPSHPMKNFTYMRTSSMNEFTSSSTDLCYSD.

The F-box domain occupies 8–54 (ACLLLMLPEDIFVVISRFLSPSDICNLILCGKSLRALVDSEKTWLVQ). Positions 318-338 (LRKSSSSKNTTPSQSEIRHSN) are disordered. Positions 320-332 (KSSSSKNTTPSQS) are enriched in low complexity.

In Arabidopsis thaliana (Mouse-ear cress), this protein is Probable F-box protein At5g39490.